Here is a 117-residue protein sequence, read N- to C-terminus: Non-specific lipid-transfer protein 1 (117 aa).

The first 25 residues, methionine 1–alanine 25, serve as a signal peptide directing secretion. Intrachain disulfides connect cysteine 29-cysteine 76, cysteine 39-cysteine 53, cysteine 54-cysteine 99, and cysteine 74-cysteine 113.

The protein belongs to the plant LTP family.

Functionally, plant non-specific lipid-transfer proteins transfer phospholipids as well as galactolipids across membranes. May play a role in wax or cutin deposition in the cell walls of expanding epidermal cells and certain secretory tissues. The polypeptide is Non-specific lipid-transfer protein 1 (LTP1) (Brassica napus (Rape)).